The chain runs to 216 residues: Uracil phosphoribosyltransferase (216 aa).

5-phospho-alpha-D-ribose 1-diphosphate-binding positions include R85, R110, and 135–143 (DPMVATGYS). Uracil contacts are provided by residues I200 and 205–207 (GDA). Residue D206 participates in 5-phospho-alpha-D-ribose 1-diphosphate binding.

Belongs to the UPRTase family. Requires Mg(2+) as cofactor.

The enzyme catalyses UMP + diphosphate = 5-phospho-alpha-D-ribose 1-diphosphate + uracil. The protein operates within pyrimidine metabolism; UMP biosynthesis via salvage pathway; UMP from uracil: step 1/1. With respect to regulation, allosterically activated by GTP. Functionally, catalyzes the conversion of uracil and 5-phospho-alpha-D-ribose 1-diphosphate (PRPP) to UMP and diphosphate. The polypeptide is Uracil phosphoribosyltransferase (Burkholderia ambifaria (strain MC40-6)).